The sequence spans 414 residues: Glutamyl-tRNA reductase (414 aa).

Substrate-binding positions include 47–50, serine 106, 111–113, and glutamine 117; these read TCNR and EAQ. The Nucleophile role is filled by cysteine 48. 185-190 lines the NADP(+) pocket; the sequence is GAGRTG.

The protein belongs to the glutamyl-tRNA reductase family. In terms of assembly, homodimer.

The enzyme catalyses (S)-4-amino-5-oxopentanoate + tRNA(Glu) + NADP(+) = L-glutamyl-tRNA(Glu) + NADPH + H(+). It participates in porphyrin-containing compound metabolism; protoporphyrin-IX biosynthesis; 5-aminolevulinate from L-glutamyl-tRNA(Glu): step 1/2. Catalyzes the NADPH-dependent reduction of glutamyl-tRNA(Glu) to glutamate 1-semialdehyde (GSA). The sequence is that of Glutamyl-tRNA reductase from Herpetosiphon aurantiacus (strain ATCC 23779 / DSM 785 / 114-95).